We begin with the raw amino-acid sequence, 197 residues long: Signal-regulatory protein delta (197 aa).

The first 29 residues, 1–29 (MPIPASPLHPPLPSLLLYLLLELAGVTHV), serve as a signal peptide directing secretion. The 105-residue stretch at 31-135 (HVQQTEMSQT…IKEYQSGRGT (105 aa)) folds into the Ig-like V-type domain. The cysteines at positions 51 and 117 are disulfide-linked. A disordered region spans residues 139-158 (VTEQNPRPPKNRPAGRAGSR). A glycan (N-linked (GlcNAc...) asparagine) is linked at Asn-174.

It is found in the secreted. The sequence is that of Signal-regulatory protein delta (SIRPD) from Homo sapiens (Human).